The chain runs to 265 residues: UDP-N-acetylenolpyruvoylglucosamine reductase (265 aa).

In terms of domain architecture, FAD-binding PCMH-type spans 15–169; the sequence is GVGGPAELWT…TRVRLKLKER (155 aa). Arg-149 is an active-site residue. The interval 182 to 203 is disordered; that stretch reads DRARKGQPKRKSAGCAFKNPPG. The active-site Proton donor is Cys-196.

It belongs to the MurB family. FAD serves as cofactor.

The protein localises to the cytoplasm. It carries out the reaction UDP-N-acetyl-alpha-D-muramate + NADP(+) = UDP-N-acetyl-3-O-(1-carboxyvinyl)-alpha-D-glucosamine + NADPH + H(+). It participates in cell wall biogenesis; peptidoglycan biosynthesis. Cell wall formation. This is UDP-N-acetylenolpyruvoylglucosamine reductase from Thermus thermophilus (strain ATCC 27634 / DSM 579 / HB8).